A 495-amino-acid chain; its full sequence is UDP-N-acetylmuramoyl-L-alanyl-D-glutamate--2,6-diaminopimelate ligase (495 aa).

UDP-N-acetyl-alpha-D-muramoyl-L-alanyl-D-glutamate is bound by residues L27, S29, and 44-46 (HQA). Residue 116-122 (GTNGKTT) participates in ATP binding. UDP-N-acetyl-alpha-D-muramoyl-L-alanyl-D-glutamate contacts are provided by residues N157, 158–159 (TT), S185, Q191, and R193. At K225 the chain carries N6-carboxylysine. Meso-2,6-diaminopimelate is bound by residues R390, 414 to 417 (DNPR), G465, and E469. Residues 414–417 (DNPR) carry the Meso-diaminopimelate recognition motif motif.

This sequence belongs to the MurCDEF family. MurE subfamily. Mg(2+) serves as cofactor. Carboxylation is probably crucial for Mg(2+) binding and, consequently, for the gamma-phosphate positioning of ATP.

The protein resides in the cytoplasm. The enzyme catalyses UDP-N-acetyl-alpha-D-muramoyl-L-alanyl-D-glutamate + meso-2,6-diaminopimelate + ATP = UDP-N-acetyl-alpha-D-muramoyl-L-alanyl-gamma-D-glutamyl-meso-2,6-diaminopimelate + ADP + phosphate + H(+). It participates in cell wall biogenesis; peptidoglycan biosynthesis. In terms of biological role, catalyzes the addition of meso-diaminopimelic acid to the nucleotide precursor UDP-N-acetylmuramoyl-L-alanyl-D-glutamate (UMAG) in the biosynthesis of bacterial cell-wall peptidoglycan. This Escherichia coli O157:H7 protein is UDP-N-acetylmuramoyl-L-alanyl-D-glutamate--2,6-diaminopimelate ligase.